The sequence spans 467 residues: Glutamate--tRNA ligase (467 aa).

The 'HIGH' region motif lies at Pro-10 to Gly-20. Positions Arg-238–Arg-242 match the 'KMSKS' region motif. Lys-241 contributes to the ATP binding site.

The protein belongs to the class-I aminoacyl-tRNA synthetase family. Glutamate--tRNA ligase type 1 subfamily. As to quaternary structure, monomer.

It is found in the cytoplasm. It carries out the reaction tRNA(Glu) + L-glutamate + ATP = L-glutamyl-tRNA(Glu) + AMP + diphosphate. Catalyzes the attachment of glutamate to tRNA(Glu) in a two-step reaction: glutamate is first activated by ATP to form Glu-AMP and then transferred to the acceptor end of tRNA(Glu). The chain is Glutamate--tRNA ligase from Citrifermentans bemidjiense (strain ATCC BAA-1014 / DSM 16622 / JCM 12645 / Bem) (Geobacter bemidjiensis).